A 319-amino-acid polypeptide reads, in one-letter code: Malate dehydrogenase (319 aa).

NAD(+)-binding positions include glycine 11–glycine 16 and aspartate 36. Residues arginine 85 and arginine 91 each contribute to the substrate site. NAD(+) is bound by residues asparagine 98 and valine 121 to asparagine 123. Asparagine 123 and arginine 154 together coordinate substrate. Catalysis depends on histidine 178, which acts as the Proton acceptor.

The protein belongs to the LDH/MDH superfamily. MDH type 3 family.

The catalysed reaction is (S)-malate + NAD(+) = oxaloacetate + NADH + H(+). Functionally, catalyzes the reversible oxidation of malate to oxaloacetate. This is Malate dehydrogenase from Sulfurimonas denitrificans (strain ATCC 33889 / DSM 1251) (Thiomicrospira denitrificans (strain ATCC 33889 / DSM 1251)).